Consider the following 137-residue polypeptide: Basic phospholipase A2 homolog Cax-K49 (137 aa).

Positions 1 to 16 (MRTFWIVAMLLVGVEG) are cleaved as a signal peptide. 7 cysteine pairs are disulfide-bonded: C42-C131, C44-C60, C59-C111, C65-C137, C66-C104, C73-C97, and C91-C102. The interval 121–133 (KKYKIYPKFLCKK) is important for membrane-damaging activities in eukaryotes and bacteria; heparin-binding.

In terms of assembly, homodimer; non-covalently linked. In terms of tissue distribution, expressed by the venom gland.

The protein localises to the secreted. In terms of biological role, snake venom phospholipase A2 homolog that lacks enzymatic activity. Displays edema-inducing activities and may be myotoxic. A model of myotoxic mechanism has been proposed: an apo Lys49-PLA2 is activated by the entrance of a hydrophobic molecule (e.g. fatty acid) at the hydrophobic channel of the protein leading to a reorientation of a monomer. This reorientation causes a transition between 'inactive' to 'active' states, causing alignment of C-terminal and membrane-docking sites (MDoS) side-by-side and putting the membrane-disruption sites (MDiS) in the same plane, exposed to solvent and in a symmetric position for both monomers. The MDoS region stabilizes the toxin on membrane by the interaction of charged residues with phospholipid head groups. Subsequently, the MDiS region destabilizes the membrane with penetration of hydrophobic residues. This insertion causes a disorganization of the membrane, allowing an uncontrolled influx of ions (i.e. calcium and sodium), and eventually triggering irreversible intracellular alterations and cell death. This Crotalus atrox (Western diamondback rattlesnake) protein is Basic phospholipase A2 homolog Cax-K49.